We begin with the raw amino-acid sequence, 309 residues long: Homoserine kinase (309 aa).

Residue 91 to 101 (PIGSGLGSSAC) participates in ATP binding.

The protein belongs to the GHMP kinase family. Homoserine kinase subfamily.

The protein resides in the cytoplasm. It carries out the reaction L-homoserine + ATP = O-phospho-L-homoserine + ADP + H(+). Its pathway is amino-acid biosynthesis; L-threonine biosynthesis; L-threonine from L-aspartate: step 4/5. Catalyzes the ATP-dependent phosphorylation of L-homoserine to L-homoserine phosphate. The chain is Homoserine kinase from Serratia proteamaculans (strain 568).